A 247-amino-acid chain; its full sequence is MSHRDTLFSAPIARLGDWTFDERVAEVFPDMIQRSVPGYSNIISMIGMLAERFVQPNTQVYDLGCSLGAATLSVRRNIRHEHCRIIAVDNSPAMIERCRRHIDAYKAPTPVEVVEGDIRDITIENASMVVLNFTLQFLEPAERQALLDKIYLGLNPGGALVLSEKFSFEDAKVGELLFNMHHDFKRANGYSELEISQKRSMLENVMLTDSVETHKARLRKAGFEHSELWFQCFNFGSLVALKAGVAA.

Residues tyrosine 39, 64–66 (GCS), 89–90 (DN), 117–118 (DI), asparagine 132, and arginine 199 contribute to the S-adenosyl-L-methionine site.

This sequence belongs to the class I-like SAM-binding methyltransferase superfamily. Cx-SAM synthase family. Homodimer.

It catalyses the reaction prephenate + S-adenosyl-L-methionine = carboxy-S-adenosyl-L-methionine + 3-phenylpyruvate + H2O. Its function is as follows. Catalyzes the conversion of S-adenosyl-L-methionine (SAM) to carboxy-S-adenosyl-L-methionine (Cx-SAM). This chain is Carboxy-S-adenosyl-L-methionine synthase, found in Salmonella enteritidis PT4 (strain P125109).